The following is a 260-amino-acid chain: Vaa serine proteinase homolog 1 (260 aa).

Residues 1-18 form the signal peptide; the sequence is MVLIRVLANLLVLQLSYA. Positions 19–24 are excised as a propeptide; the sequence is QKSSEL. One can recognise a Peptidase S1 domain in the interval 25 to 251; the sequence is VIGGDECNIN…YTDWIQSIIA (227 aa). 6 disulfides stabilise this stretch: C31/C165, C52/C68, C100/C258, C144/C212, C176/C191, and C202/C227. N123 carries N-linked (GlcNAc...) asparagine glycosylation. Residues 172–186 are key residues for binding to FVIIIa; sequence DYSVCQKVYRKLPEK. N-linked (GlcNAc...) asparagine glycosylation is present at N253.

Belongs to the peptidase S1 family. Snake venom subfamily. In terms of processing, N-glycosylated. The toxin exists in multiple glycoforms. Expressed by the venom gland.

It is found in the secreted. In terms of biological role, this is the first member of the serine protease family that has strong anticoagulant activity and lacks enzymatic activity. It inhibits activities of three blood coagulation complexes: (1) prothrombinase complex (composed of blood coagulation factors Va and Xa (F5 and F10)) (IC(50)=164.1 nM), (2) intrinsic tenase complex (composed of factors VIIIa and IXa (F8 and F9)), and (3) extrinsic tenase complex (composed of tissue factor and factor VIIa (F7)). The toxin also has been observed to bind prothrombin, factor FVa, non-activated and activated forms of factors FVII (F7) (FVII and FVIIa), factor FVIIIa (F8), factors FIX and FIXa (F9) and factors FX and FXa (F10). The toxin inhibits the activity of the intrinsic tenase complex mainly by competing with FIXa (F9) for binding to FVIIIa (F8). The sequence is that of Vaa serine proteinase homolog 1 from Vipera ammodytes ammodytes (Western sand viper).